Here is a 489-residue protein sequence, read N- to C-terminus: Putative ATP-dependent RNA helicase T26G10.1 (489 aa).

The Q motif motif lies at 44-72; that stretch reads KSFAELGVSQPLCDACQRLGWMKPSKIQQ. The region spanning 75-246 is the Helicase ATP-binding domain; it reads LPHALQGKDV…RASLRDPARV (172 aa). 88–95 is an ATP binding site; it reads AETGSGKT. Positions 194–197 match the DEAD box motif; sequence DEAD. The 161-residue stretch at 257 to 417 folds into the Helicase C-terminal domain; that stretch reads NLKQHYIFVP…EYKCVENEVM (161 aa). Positions 433–489 are disordered; it reads EMKEMDEKKKSGKKRRQNDDFGDTEESGGRFKMGIKSMGGRGGSGGGRGGKKKKMSK. A compositionally biased stretch (gly residues) spans 469–480; sequence SMGGRGGSGGGR.

This sequence belongs to the DEAD box helicase family. DDX47/RRP3 subfamily.

Its subcellular location is the nucleus. The enzyme catalyses ATP + H2O = ADP + phosphate + H(+). In terms of biological role, probable ATP-dependent RNA helicase which may be involved in ribosome biogenesis. This is Putative ATP-dependent RNA helicase T26G10.1 from Caenorhabditis elegans.